We begin with the raw amino-acid sequence, 339 residues long: GTP 3',8-cyclase (339 aa).

A Radical SAM core domain is found at arginine 13–alanine 249. Residue arginine 22 participates in GTP binding. The [4Fe-4S] cluster site is built by cysteine 29 and cysteine 33. Residue tyrosine 35 participates in S-adenosyl-L-methionine binding. Cysteine 36 lines the [4Fe-4S] cluster pocket. Arginine 75 contacts GTP. Position 79 (glycine 79) interacts with S-adenosyl-L-methionine. GTP is bound at residue threonine 106. Residue serine 130 coordinates S-adenosyl-L-methionine. Lysine 168 is a binding site for GTP. Methionine 202 is an S-adenosyl-L-methionine binding site. [4Fe-4S] cluster is bound by residues cysteine 266 and cysteine 269. Arginine 271–arginine 273 lines the GTP pocket. Position 283 (cysteine 283) interacts with [4Fe-4S] cluster.

This sequence belongs to the radical SAM superfamily. MoaA family. In terms of assembly, monomer and homodimer. [4Fe-4S] cluster serves as cofactor.

The enzyme catalyses GTP + AH2 + S-adenosyl-L-methionine = (8S)-3',8-cyclo-7,8-dihydroguanosine 5'-triphosphate + 5'-deoxyadenosine + L-methionine + A + H(+). The protein operates within cofactor biosynthesis; molybdopterin biosynthesis. Catalyzes the cyclization of GTP to (8S)-3',8-cyclo-7,8-dihydroguanosine 5'-triphosphate. This Xanthomonas campestris pv. campestris (strain B100) protein is GTP 3',8-cyclase.